The following is a 467-amino-acid chain: NADH-ubiquinone oxidoreductase chain 4 (467 aa).

Helical transmembrane passes span 21–40, 54–74, 79–99, 105–125, 135–155, 168–188, 207–227, 239–259, 266–286, 297–317, 330–350, 367–387, and 420–440; these read SMSK…PTLY, MADV…ISNW, STLY…NFMC, FYMY…LYGA, VLMY…LYEV, LVLS…GIAV, PLAG…FAMI, VTYT…TSII, LKVI…LGML, LVLC…VGGM, FQGL…LSFC, LTGA…SVLL, and VLMI…SWVM.

This sequence belongs to the complex I subunit 4 family.

The protein resides in the mitochondrion membrane. The enzyme catalyses a ubiquinone + NADH + 5 H(+)(in) = a ubiquinol + NAD(+) + 4 H(+)(out). In terms of biological role, core subunit of the mitochondrial membrane respiratory chain NADH dehydrogenase (Complex I) that is believed to belong to the minimal assembly required for catalysis. Complex I functions in the transfer of electrons from NADH to the respiratory chain. The immediate electron acceptor for the enzyme is believed to be ubiquinone. The chain is NADH-ubiquinone oxidoreductase chain 4 (ND4) from Debaryomyces hansenii (strain ATCC 36239 / CBS 767 / BCRC 21394 / JCM 1990 / NBRC 0083 / IGC 2968) (Yeast).